Consider the following 152-residue polypeptide: Neuropeptide W (152 aa).

The signal sequence occupies residues 1–32 (MGARGPGPGATARRRLLALLLLLLLLPLPARA). The propeptide occupies 65-152 (ALRPAAGPLA…LGASSWTSAE (88 aa)). Disordered regions lie at residues 79–108 (GQDVPPRGPSARNALSPGPAPRDAPLLPPG) and 122–152 (SGIPVSAPRSPRARGSEPQPELGASSWTSAE). Residues 96–106 (GPAPRDAPLLP) are compositionally biased toward pro residues.

It belongs to the neuropeptide B/W family.

It is found in the secreted. Plays a regulatory role in the organization of neuroendocrine signals accessing the anterior pituitary gland. Stimulates water drinking and food intake. May play a role in the hypothalamic response to stress. In Sus scrofa (Pig), this protein is Neuropeptide W (NPW).